The following is a 120-amino-acid chain: ATP synthase subunit a (120 aa).

The next 4 helical transmembrane spans lie at 2–22, 29–49, 59–79, and 94–116; these read FFYS…YSYL, FFPF…VGIV, LNIT…LGFY, and IPFV…RSVG.

This sequence belongs to the ATPase A chain family. As to quaternary structure, F-type ATPases have 2 components, CF(1) - the catalytic core - and CF(0) - the membrane proton channel. CF(1) has five subunits: alpha(3), beta(3), gamma(1), delta(1), epsilon(1). CF(0) has three main subunits: a, b and c.

It is found in the mitochondrion inner membrane. Mitochondrial membrane ATP synthase (F(1)F(0) ATP synthase or Complex V) produces ATP from ADP in the presence of a proton gradient across the membrane which is generated by electron transport complexes of the respiratory chain. F-type ATPases consist of two structural domains, F(1) - containing the extramembraneous catalytic core and F(0) - containing the membrane proton channel, linked together by a central stalk and a peripheral stalk. During catalysis, ATP synthesis in the catalytic domain of F(1) is coupled via a rotary mechanism of the central stalk subunits to proton translocation. Key component of the proton channel; it may play a direct role in the translocation of protons across the membrane. The polypeptide is ATP synthase subunit a (ATP6) (Naegleria fowleri (Brain eating amoeba)).